Reading from the N-terminus, the 61-residue chain is Small ribosomal subunit protein uS14 (61 aa).

Residues Cys24, Cys27, Cys40, and Cys43 each coordinate Zn(2+).

Belongs to the universal ribosomal protein uS14 family. Zinc-binding uS14 subfamily. Part of the 30S ribosomal subunit. Contacts proteins S3 and S10. Zn(2+) is required as a cofactor.

Binds 16S rRNA, required for the assembly of 30S particles and may also be responsible for determining the conformation of the 16S rRNA at the A site. The polypeptide is Small ribosomal subunit protein uS14 (Thermodesulfovibrio yellowstonii (strain ATCC 51303 / DSM 11347 / YP87)).